Consider the following 389-residue polypeptide: Probable transcription factor FL (389 aa).

2 disordered regions span residues 1–41 (MDPN…ANVP) and 140–226 (EHDM…HPFV). The span at 19 to 39 (PPAPAPVPPPPPPPPPPPPAN) shows a compositional bias: pro residues. Over residues 159–180 (VTGKKQAKKGSAARKGKKARRK) the composition is skewed to basic residues. A Nuclear localization signal motif is present at residues 161–168 (GKKQAKKG). The span at 190-201 (QEDEMDCCDEDG) shows a compositional bias: acidic residues. 3 consecutive DNA-binding regions follow at residues 221 to 225 (REHPF), 290 to 297 (NKPKMRHY), and 361 to 364 (YVPT).

Belongs to the FLO/LFY family. In terms of assembly, interacts with APO1. In terms of tissue distribution, in very young panicle but not in mature florets, mature leaves, roots or apical meristems.

The protein localises to the nucleus. In terms of biological role, probable transcription factor. Together with APO1, involved in the temporal regulation of meristem size and identity during both vegetative and reproductive developments through interaction with APO1. Promotes flowering. The polypeptide is Probable transcription factor FL (Oryza sativa subsp. japonica (Rice)).